Reading from the N-terminus, the 358-residue chain is 3-dehydroquinate synthase (358 aa).

NAD(+) is bound by residues 70-75 (DGEKFK), 104-108 (GVVGD), 128-129 (TT), Lys-141, Lys-150, and 168-171 (CLQT). Residues Glu-183, His-246, and His-263 each contribute to the Zn(2+) site.

This sequence belongs to the sugar phosphate cyclases superfamily. Dehydroquinate synthase family. Co(2+) serves as cofactor. Zn(2+) is required as a cofactor. The cofactor is NAD(+).

It localises to the cytoplasm. The catalysed reaction is 7-phospho-2-dehydro-3-deoxy-D-arabino-heptonate = 3-dehydroquinate + phosphate. It functions in the pathway metabolic intermediate biosynthesis; chorismate biosynthesis; chorismate from D-erythrose 4-phosphate and phosphoenolpyruvate: step 2/7. Catalyzes the conversion of 3-deoxy-D-arabino-heptulosonate 7-phosphate (DAHP) to dehydroquinate (DHQ). The chain is 3-dehydroquinate synthase from Shewanella frigidimarina (strain NCIMB 400).